Consider the following 879-residue polypeptide: Pentatricopeptide repeat-containing protein At1g71210, mitochondrial (879 aa).

Residues 1–44 (MLRCWSVTVERSCEGMLLRRRILSLSASSFRNFTSGNNGDAIPF) constitute a mitochondrion transit peptide. 16 PPR repeats span residues 181-215 (SLRLCDALVVGYAVAGRTDIALQHFGNMRFRGLDL), 216-246 (DSFGYHVLLNALVEEKCFDSFDVIFDQISVR), 250-280 (CAVTHSILVKKFCKQGKLDEAEDYLRALLPN), 285-319 (CGSGLGILVDALCSKRKFQEATKLLDEIKLVGTVN), 320-355 (MDRAYNIWIRALIKAGFLNNPADFLQKISPLEGCEL), 356-390 (EVFRYNSMVFQLLKENNLDGVYDILTEMMVRGVSP), 391-425 (NKKTMNAALCFFCKAGFVDEALELYRSRSEIGFAP), 426-460 (TAMSYNYLIHTLCANESVEQAYDVLKGAIDRGHFL), 461-495 (GGKTFSTLTNALCWKGKPDMARELVIAAAERDLLP), 496-530 (KRIAGCKIISALCDVGKVEDALMINELFNKSGVDT), 531-565 (SFKMFTSLIYGSITLMRGDIAAKLIIRMQEKGYTP), 566-597 (TRSLYRNVIQCVCEMESGEKNFFTTLLKFQLS), 602-636 (KVQAYNLFIEGAGFAGKPKLARLVYDMMDRDGITP), 637-667 (TVASNILMLQSYLKNEKIADALHFFHDLREQ), 671-705 (KKRLYQVMIVGLCKANKLDDAMHFLEEMKGEGLQP), and 706-740 (SIECYEVNIQKLCNEEKYDEAVGLVNEFRKSGRRI).

It belongs to the PPR family. P subfamily.

It localises to the mitochondrion. This is Pentatricopeptide repeat-containing protein At1g71210, mitochondrial from Arabidopsis thaliana (Mouse-ear cress).